Reading from the N-terminus, the 33-residue chain is MSDIN-like toxin proprotein 2 (33 aa).

Residues 1 to 10 constitute a propeptide that is removed on maturation; it reads MSDINATRLP. Positions 11-18 form a cross-link, cyclopeptide (Ile-Pro); that stretch reads IILAPIIP. Residues 19–33 constitute a propeptide that is removed on maturation; it reads CINDDVNSTLTSGER.

It belongs to the MSDIN fungal toxin family. In terms of processing, processed by the macrocyclase-peptidase enzyme POPB to yield a toxic cyclic octapeptide. POPB first removes 10 residues from the N-terminus. Conformational trapping of the remaining peptide forces the enzyme to release this intermediate rather than proceed to macrocyclization. The enzyme rebinds the remaining peptide in a different conformation and catalyzes macrocyclization of the N-terminal 8 residues.

Functionally, probable toxin that belongs to the MSDIN-like toxin family responsible for a large number of food poisoning cases and deaths. The sequence is that of MSDIN-like toxin proprotein 2 from Amanita phalloides (Death cap).